The sequence spans 322 residues: Crystallin J1B (322 aa).

It belongs to the ADP-ribosylglycohydrolase family. J1 crystallin subfamily. Expressed in the rhopalia. Present in both the large and small eyes.

The protein is Crystallin J1B of Tripedalia cystophora (Jellyfish).